A 302-amino-acid chain; its full sequence is UPF0761 membrane protein Tola_0461 (302 aa).

Helical transmembrane passes span 51–71, 111–131, 150–170, 188–208, 222–242, and 256–276; these read YVSL…LSWL, TTSI…AAID, ITMY…SLLL, LGGG…ILLL, ALLG…GFGY, and ALAG…VVLL.

Belongs to the UPF0761 family.

Its subcellular location is the cell inner membrane. The polypeptide is UPF0761 membrane protein Tola_0461 (Tolumonas auensis (strain DSM 9187 / NBRC 110442 / TA 4)).